The following is a 413-amino-acid chain: Aminopeptidase 2 (413 aa).

6 residues coordinate a divalent metal cation: Glu-250, Glu-316, Glu-340, His-345, His-378, and Asp-380.

Belongs to the peptidase M29 family. In terms of assembly, homodimer. Co(2+) is required as a cofactor. Requires Zn(2+) as cofactor. It depends on Mg(2+) as a cofactor.

In terms of biological role, broad specificity metal-dependent exopeptidase, releasing all N-terminal amino acids. The polypeptide is Aminopeptidase 2 (Geobacillus stearothermophilus (Bacillus stearothermophilus)).